A 118-amino-acid chain; its full sequence is Class I hydrophobin hum2 (118 aa).

An N-terminal signal peptide occupies residues 1–19 (MQFKTIFATLAAFAAVASA). Intrachain disulfides connect Cys-33–Cys-98, Cys-40–Cys-92, Cys-41–Cys-74, and Cys-99–Cys-112.

This sequence belongs to the fungal hydrophobin family. In terms of assembly, self-assembles to form functional amyloid fibrils called rodlets. Self-assembly into fibrillar rodlets occurs spontaneously at hydrophobic:hydrophilic interfaces and the rodlets further associate laterally to form amphipathic monolayers.

It is found in the secreted. Its subcellular location is the cell wall. Its function is as follows. Aerial growth, conidiation, and dispersal of filamentous fungi in the environment rely upon a capability of their secreting small amphipathic proteins called hydrophobins (HPBs) with low sequence identity. Class I can self-assemble into an outermost layer of rodlet bundles on aerial cell surfaces, conferring cellular hydrophobicity that supports fungal growth, development and dispersal; whereas Class II form highly ordered films at water-air interfaces through intermolecular interactions but contribute nothing to the rodlet structure. Hum2 is a class I hydrophobin which that plays a role in, but seems not to be crucial for the formation of aerial hyphae. Hydrophobins of Mycosarcoma maydis have been functionally replaced, at least partially, by repellents. The sequence is that of Class I hydrophobin hum2 from Mycosarcoma maydis (Corn smut fungus).